We begin with the raw amino-acid sequence, 218 residues long: Nucleoid occlusion factor SlmA (218 aa).

An HTH tetR-type domain is found at 30–90 (ERRQQVLTVL…ALIEHIESTL (61 aa)). Residues 53–72 (TTARLAKEVGVSEAALYRYF) constitute a DNA-binding region (H-T-H motif).

It belongs to the nucleoid occlusion factor SlmA family. As to quaternary structure, homodimer. Interacts with FtsZ.

The protein localises to the cytoplasm. It localises to the nucleoid. Its function is as follows. Required for nucleoid occlusion (NO) phenomenon, which prevents Z-ring formation and cell division over the nucleoid. Acts as a DNA-associated cell division inhibitor that binds simultaneously chromosomal DNA and FtsZ, and disrupts the assembly of FtsZ polymers. SlmA-DNA-binding sequences (SBS) are dispersed on non-Ter regions of the chromosome, preventing FtsZ polymerization at these regions. The polypeptide is Nucleoid occlusion factor SlmA (Haemophilus influenzae (strain PittGG)).